The following is a 264-amino-acid chain: Late embryogenesis abundant protein D-34 (264 aa).

The span at 1-16 (MSQGQPRRPQQPAGQG) shows a compositional bias: low complexity. The segment at 1–23 (MSQGQPRRPQQPAGQGENQEPIK) is disordered. 3 consecutive SMP domains span residues 22–76 (IKYG…RNEQ), 138–194 (ITIG…AHNA), and 203–261 (IKLN…LNEN).

Belongs to the LEA type SMP family.

In terms of biological role, LEA proteins are late embryonic proteins abundant in higher plant seed embryos. There are two subsets of LEA proteins (5a and 5b), the first ones are expressed when the cotyledon weight reach 80 mg and the second set are expressed above 100 mg. The function of those proteins is not known. The chain is Late embryogenesis abundant protein D-34 from Gossypium hirsutum (Upland cotton).